The primary structure comprises 118 residues: Large ribosomal subunit protein bL20 (118 aa).

It belongs to the bacterial ribosomal protein bL20 family.

In terms of biological role, binds directly to 23S ribosomal RNA and is necessary for the in vitro assembly process of the 50S ribosomal subunit. It is not involved in the protein synthesizing functions of that subunit. This Shigella flexneri serotype 5b (strain 8401) protein is Large ribosomal subunit protein bL20.